The sequence spans 426 residues: Enolase (426 aa).

Gln163 contributes to the (2R)-2-phosphoglycerate binding site. Glu205 (proton donor) is an active-site residue. Mg(2+)-binding residues include Asp242, Glu283, and Asp310. (2R)-2-phosphoglycerate is bound by residues Lys335, Arg364, Ser365, and Lys386. The Proton acceptor role is filled by Lys335.

The protein belongs to the enolase family. Requires Mg(2+) as cofactor.

Its subcellular location is the cytoplasm. The protein resides in the secreted. It localises to the cell surface. The enzyme catalyses (2R)-2-phosphoglycerate = phosphoenolpyruvate + H2O. It functions in the pathway carbohydrate degradation; glycolysis; pyruvate from D-glyceraldehyde 3-phosphate: step 4/5. Its function is as follows. Catalyzes the reversible conversion of 2-phosphoglycerate (2-PG) into phosphoenolpyruvate (PEP). It is essential for the degradation of carbohydrates via glycolysis. The polypeptide is Enolase (Beutenbergia cavernae (strain ATCC BAA-8 / DSM 12333 / CCUG 43141 / JCM 11478 / NBRC 16432 / NCIMB 13614 / HKI 0122)).